We begin with the raw amino-acid sequence, 155 residues long: Small ribosomal subunit protein uS7cz/uS7cy (155 aa).

The protein belongs to the universal ribosomal protein uS7 family. As to quaternary structure, part of the 30S ribosomal subunit.

Its subcellular location is the plastid. It is found in the chloroplast. Functionally, one of the primary rRNA binding proteins, it binds directly to 16S rRNA where it nucleates assembly of the head domain of the 30S subunit. The sequence is that of Small ribosomal subunit protein uS7cz/uS7cy (rps7-A) from Anthoceros angustus (Hornwort).